The chain runs to 373 residues: UPF0725 protein At1g23950 (373 aa).

Thr-2 bears the N-acetylthreonine mark.

This sequence belongs to the UPF0725 (EMB2204) family.

The chain is UPF0725 protein At1g23950 from Arabidopsis thaliana (Mouse-ear cress).